A 129-amino-acid polypeptide reads, in one-letter code: Small ribosomal subunit protein uS8 (129 aa).

The protein belongs to the universal ribosomal protein uS8 family. As to quaternary structure, part of the 30S ribosomal subunit. Contacts proteins S5 and S12.

In terms of biological role, one of the primary rRNA binding proteins, it binds directly to 16S rRNA central domain where it helps coordinate assembly of the platform of the 30S subunit. The sequence is that of Small ribosomal subunit protein uS8 from Colwellia psychrerythraea (strain 34H / ATCC BAA-681) (Vibrio psychroerythus).